A 255-amino-acid chain; its full sequence is Acetylglutamate kinase (255 aa).

Substrate-binding positions include 40–41 (GG), Arg62, and Asn157.

The protein belongs to the acetylglutamate kinase family. ArgB subfamily.

The protein resides in the cytoplasm. It carries out the reaction N-acetyl-L-glutamate + ATP = N-acetyl-L-glutamyl 5-phosphate + ADP. It functions in the pathway amino-acid biosynthesis; L-arginine biosynthesis; N(2)-acetyl-L-ornithine from L-glutamate: step 2/4. Catalyzes the ATP-dependent phosphorylation of N-acetyl-L-glutamate. In Parabacteroides distasonis (strain ATCC 8503 / DSM 20701 / CIP 104284 / JCM 5825 / NCTC 11152), this protein is Acetylglutamate kinase.